A 654-amino-acid polypeptide reads, in one-letter code: MLLRPKSGNILKYGHFLSKRWLTASKLLYSVEEMKIKISQDQYRKALEERIDKIPIENYRNFSIVAHVDHGKSTLSDRLLEMTGVIKPGSKSQVLDKLDVERERGITVKAQTVSMFYNDGKQDYLLHLVDTPGHVDFRAEVSRSYASCGGALLLVDASQGVQAQTVANFYLAYSMGLKLIPIINKIDLDSANIAGAKEQIETTFELDPNDCIAVSAKTGLNVEQIIPSVIKNIPSPVCDVNKPLRALLVDSWHDPYVGVVMLVHIVDGKMKKGMKILSAHTNRTYDVKEVGIMYPDRTPTSFIKAGQVAYIIPGMKNPREALVGDTFYQMGKHEDLEPLPGFEEPKPMVFVGAFPADGKEFNAMDDQMQNLVLNDRSVTLEQETSNALGLGWRLGFLGSLHASVFKERLEKEYGAKIILTAPTVPYKIIYKNGEEKIVTNPDDFPDNQKHYDVESYMEPYVEAIMTVPNEYIGNVMTLCLNNRGEQKEIEYLTTGQVLLKYEIPTSQLVEDFFGKLKGCTKGYASLDYEEAGYRKSDIVKMQLCVNGEPQDALTTVIHRSQAQARGKEYVTRFKKYLSYQLFEVAIQAKINNKVVARETIKAKRKDVTQRLHAADISRYKKLLERQKEGKKQMKLSGKVTIKNDAYQAFLRRED.

In terms of domain architecture, tr-type G spans 57–237; sequence ENYRNFSIVA…SVIKNIPSPV (181 aa). GTP contacts are provided by residues 66-73, 130-134, and 184-187; these read AHVDHGKS, DTPGH, and NKID.

This sequence belongs to the TRAFAC class translation factor GTPase superfamily. Classic translation factor GTPase family. LepA subfamily.

It is found in the mitochondrion inner membrane. It catalyses the reaction GTP + H2O = GDP + phosphate + H(+). Functionally, promotes mitochondrial protein synthesis. May act as a fidelity factor of the translation reaction, by catalyzing a one-codon backward translocation of tRNAs on improperly translocated ribosomes. Binds to mitochondrial ribosomes in a GTP-dependent manner. The protein is Translation factor GUF1, mitochondrial of Candida dubliniensis (strain CD36 / ATCC MYA-646 / CBS 7987 / NCPF 3949 / NRRL Y-17841) (Yeast).